Here is a 560-residue protein sequence, read N- to C-terminus: Membrane protein insertase YidC (560 aa).

6 helical membrane passes run 5–25 (IINL…WQYF), 334–354 (AIDF…MNFF), 357–377 (YVGN…LLMF), 431–451 (LPIL…YVTI), 476–496 (LFGL…WPIL), and 522–542 (FMPL…LIYW).

This sequence belongs to the OXA1/ALB3/YidC family. Type 1 subfamily. In terms of assembly, interacts with the Sec translocase complex via SecD. Specifically interacts with transmembrane segments of nascent integral membrane proteins during membrane integration.

It localises to the cell inner membrane. Functionally, required for the insertion and/or proper folding and/or complex formation of integral membrane proteins into the membrane. Involved in integration of membrane proteins that insert both dependently and independently of the Sec translocase complex, as well as at least some lipoproteins. Aids folding of multispanning membrane proteins. The protein is Membrane protein insertase YidC of Rickettsia rickettsii (strain Sheila Smith).